The primary structure comprises 298 residues: Leucine-rich repeat-containing protein 55 (298 aa).

Positions 1–34 are cleaved as a signal peptide; that stretch reads MGDTWAQLPWPGPPHSALLLVFFLLAAGVMHSDA. Residues 35-65 form the LRRNT domain; that stretch reads GTSCPVLCTCRNQVVDCSNQRLFSVPPDLPM. 2 disulfides stabilise this stretch: C38/C44 and C42/C51. 5 LRR repeats span residues 66–87, 90–111, 114–135, 138–160, and 163–186; these read DTRN…YLTC, ELRV…LFLH, RLAH…MFRE, GLVH…AFQG, and HLRD…EGLP. Residues 196–251 form the LRRCT domain; it reads NPWVCGCTMEPLLKWLRNRIQRCTADSQLAECRGPPEVEGAPLFSLTEESFKACHL. Disulfide bonds link C200-C227 and C202-C249. Residues 259–279 form a helical membrane-spanning segment; it reads LFIAFVGFVVSIASVATNFLL.

In terms of assembly, interacts with KCNMA1.

Its subcellular location is the cell membrane. Its function is as follows. Auxiliary protein of the large-conductance, voltage and calcium-activated potassium channel (BK alpha). Modulates gating properties by producing a marked shift in the BK channel's voltage dependence of activation in the hyperpolarizing direction, and in the absence of calcium. This Mus musculus (Mouse) protein is Leucine-rich repeat-containing protein 55 (Lrrc55).